Consider the following 432-residue polypeptide: Enolase (432 aa).

Gln163 contributes to the (2R)-2-phosphoglycerate binding site. Catalysis depends on Glu205, which acts as the Proton donor. Asp241, Glu289, and Asp316 together coordinate Mg(2+). (2R)-2-phosphoglycerate is bound by residues Lys341, Arg370, Ser371, and Lys392. The active-site Proton acceptor is Lys341.

The protein belongs to the enolase family. The cofactor is Mg(2+).

The protein resides in the cytoplasm. It localises to the secreted. Its subcellular location is the cell surface. It carries out the reaction (2R)-2-phosphoglycerate = phosphoenolpyruvate + H2O. It participates in carbohydrate degradation; glycolysis; pyruvate from D-glyceraldehyde 3-phosphate: step 4/5. In terms of biological role, catalyzes the reversible conversion of 2-phosphoglycerate (2-PG) into phosphoenolpyruvate (PEP). It is essential for the degradation of carbohydrates via glycolysis. The chain is Enolase from Treponema pallidum (strain Nichols).